A 283-amino-acid polypeptide reads, in one-letter code: Protein canopy homolog 3 (283 aa).

The first 35 residues, 1–35 (MEPLPEPTSRPRLRPRPRCLLLLPLLLLLLLLLPA), serve as a signal peptide directing secretion. The 222-residue stretch at 55 to 276 (SKCEVCKYVA…EGIQKASPLT (222 aa)) folds into the Saposin B-type domain. An N-linked (GlcNAc...) asparagine glycan is attached at Asn161. The stretch at 161–187 (NETSAEVADLKKQCDVLVEEFEEVIED) forms a coiled coil. Positions 223–283 (KGDTAALGGK…PLTHSPPDEL (61 aa)) are disordered.

The protein belongs to the canopy family. In terms of assembly, interacts with HSP90B1; this interaction is disrupted in the presence of ATP. Interacts with TLR1, TLR2, TLR4 and TLR9.

The protein resides in the endoplasmic reticulum. Its function is as follows. Toll-like receptor (TLR)-specific co-chaperone for HSP90B1. Required for proper TLR folding, except that of TLR3, and hence controls TLR exit from the endoplasmic reticulum. Consequently, required for both innate and adaptive immune responses. This is Protein canopy homolog 3 (CNPY3) from Sus scrofa (Pig).